A 331-amino-acid polypeptide reads, in one-letter code: Ketol-acid reductoisomerase (NADP(+)) (331 aa).

One can recognise a KARI N-terminal Rossmann domain in the interval 2–182 (ARMYYDADAN…GGTRAGILET (181 aa)). Residues 25–28 (YGSQ), Ser51, Ser53, and 83–86 (DEVQ) contribute to the NADP(+) site. The active site involves His108. Gly134 is a binding site for NADP(+). The KARI C-terminal knotted domain occupies 183 to 328 (SFREETETDL…KDLRAMFSWL (146 aa)). Residues Asp191, Glu195, Glu227, and Glu231 each contribute to the Mg(2+) site. Ser252 lines the substrate pocket.

It belongs to the ketol-acid reductoisomerase family. Mg(2+) is required as a cofactor.

The catalysed reaction is (2R)-2,3-dihydroxy-3-methylbutanoate + NADP(+) = (2S)-2-acetolactate + NADPH + H(+). The enzyme catalyses (2R,3R)-2,3-dihydroxy-3-methylpentanoate + NADP(+) = (S)-2-ethyl-2-hydroxy-3-oxobutanoate + NADPH + H(+). The protein operates within amino-acid biosynthesis; L-isoleucine biosynthesis; L-isoleucine from 2-oxobutanoate: step 2/4. It functions in the pathway amino-acid biosynthesis; L-valine biosynthesis; L-valine from pyruvate: step 2/4. In terms of biological role, involved in the biosynthesis of branched-chain amino acids (BCAA). Catalyzes an alkyl-migration followed by a ketol-acid reduction of (S)-2-acetolactate (S2AL) to yield (R)-2,3-dihydroxy-isovalerate. In the isomerase reaction, S2AL is rearranged via a Mg-dependent methyl migration to produce 3-hydroxy-3-methyl-2-ketobutyrate (HMKB). In the reductase reaction, this 2-ketoacid undergoes a metal-dependent reduction by NADPH to yield (R)-2,3-dihydroxy-isovalerate. The chain is Ketol-acid reductoisomerase (NADP(+)) from Crocosphaera subtropica (strain ATCC 51142 / BH68) (Cyanothece sp. (strain ATCC 51142)).